A 230-amino-acid chain; its full sequence is 3-beta-hydroxysteroid-Delta(8),Delta(7)-isomerase (230 aa).

Thr2 carries the N-acetylthreonine modification. 4 helical membrane-spanning segments follow: residues 29–49, 66–86, 121–141, and 185–205; these read WHILVGLFSFSGVLIVITWLL, LCWFAVCTFIHLVIEGWFSFY, MESVTACLWGPLSLWVVIAFL, and FWFYFVIMNAIWLVIPGILVF. The EXPERA domain maps to 61–204; that stretch reads GRRLALCWFA…IWLVIPGILV (144 aa).

The protein belongs to the EBP family. As to expression, expressed in liver.

It localises to the endoplasmic reticulum membrane. The protein resides in the nucleus envelope. The protein localises to the cytoplasmic vesicle. The enzyme catalyses lathosterol = 5alpha-cholest-8-en-3beta-ol. It carries out the reaction zymosterol = 5alpha-cholesta-7,24-dien-3beta-ol. It catalyses the reaction 5,6alpha-epoxy-5alpha-cholestan-3beta-ol + H2O = 5alpha-cholestane-3beta,5,6beta-triol. The catalysed reaction is 5,6beta-epoxy-5beta-cholestan-3beta-ol + H2O = 5alpha-cholestane-3beta,5,6beta-triol. Its pathway is steroid biosynthesis; cholesterol biosynthesis. Its activity is regulated as follows. Enzymatic activity is induced by 25-hydroxycholesterol, cholestyramine and lovastatin. In terms of biological role, isomerase that catalyzes the conversion of Delta(8)-sterols to their corresponding Delta(7)-isomers. Functionally, component of the microsomal antiestrogen binding site (AEBS), a multiproteic complex at the ER membrane that consists of an association between EBP and 7-dehydrocholesterol reductase/DHCR7. This complex is responsible for cholesterol-5,6-epoxide hydrolase (ChEH) activity, which consists in the hydration of cholesterol-5,6-epoxides (5,6-EC) into cholestane-3beta,5alpha,6beta-triol (CT). The precise role of each component of this complex has not been described yet. The protein is 3-beta-hydroxysteroid-Delta(8),Delta(7)-isomerase of Rattus norvegicus (Rat).